Reading from the N-terminus, the 149-residue chain is Large ribosomal subunit protein uL13 (149 aa).

Belongs to the universal ribosomal protein uL13 family. Part of the 50S ribosomal subunit.

Functionally, this protein is one of the early assembly proteins of the 50S ribosomal subunit, although it is not seen to bind rRNA by itself. It is important during the early stages of 50S assembly. The chain is Large ribosomal subunit protein uL13 from Cyanothece sp. (strain PCC 7425 / ATCC 29141).